The following is a 242-amino-acid chain: ATP synthase subunit a (242 aa).

5 helical membrane-spanning segments follow: residues 28 to 48 (LHGQ…LLVV), 89 to 109 (LPFV…GALI), 128 to 148 (INTT…AGLS), 193 to 213 (LVVA…AMFL), and 214 to 234 (GLFT…NYIG).

The protein belongs to the ATPase A chain family. F-type ATPases have 2 components, CF(1) - the catalytic core - and CF(0) - the membrane proton channel. CF(1) has five subunits: alpha(3), beta(3), gamma(1), delta(1), epsilon(1). CF(0) has four main subunits: a, b, b' and c.

The protein localises to the cellular thylakoid membrane. Key component of the proton channel; it plays a direct role in the translocation of protons across the membrane. The chain is ATP synthase subunit a from Synechococcus sp. (strain WH7803).